The following is a 725-amino-acid chain: Putative oligopeptide transporter YGL114W (725 aa).

9 helical membrane passes run 28–48 (ATIA…QFGL), 134–154 (FREL…FAVP), 254–274 (IIIL…SYFV), 353–373 (WILW…FIVV), 449–469 (ISGC…LFGI), 472–492 (IPLY…ILGI), 564–584 (FCAQ…MYLC), 644–664 (YGYG…GIFN), and 697–717 (IVFS…NMLF).

Belongs to the oligopeptide OPT transporter family.

The protein localises to the membrane. The protein is Putative oligopeptide transporter YGL114W of Saccharomyces cerevisiae (strain ATCC 204508 / S288c) (Baker's yeast).